The sequence spans 502 residues: 4,4'-diapophytoene desaturase (4,4'-diaponeurosporene-forming) (502 aa).

An FAD-binding site is contributed by 5-17 (VIGAGVTGLAAAA).

This sequence belongs to the carotenoid/retinoid oxidoreductase family. CrtN subfamily.

The catalysed reaction is 15-cis-4,4'-diapophytoene + 3 FAD + 3 H(+) = all-trans-4,4'-diaponeurosporene + 3 FADH2. It functions in the pathway carotenoid biosynthesis; staphyloxanthin biosynthesis; staphyloxanthin from farnesyl diphosphate: step 2/5. Involved in the biosynthesis of the yellow-orange carotenoid staphyloxanthin, which plays a role in the virulence via its protective function against oxidative stress. Catalyzes three successive dehydrogenation reactions that lead to the introduction of three double bonds into 4,4'-diapophytoene (dehydrosqualene), with 4,4'-diapophytofluene and 4,4'-diapo-zeta-carotene as intermediates, and 4,4'-diaponeurosporene (the major deep-yellow pigment in staphylococci strains) as the end product. The chain is 4,4'-diapophytoene desaturase (4,4'-diaponeurosporene-forming) from Staphylococcus aureus (strain bovine RF122 / ET3-1).